The primary structure comprises 291 residues: Serine/threonine-protein phosphatase Pgam5, mitochondrial (291 aa).

The helical transmembrane segment at 7 to 23 (FACGTGAGLAAFYLQRL) threads the bilayer. The disordered stretch occupies residues 59 to 78 (KSLVRPQKNEQPQEQNRYNS). The span at 67–77 (NEQPQEQNRYN) shows a compositional bias: polar residues.

Belongs to the phosphoglycerate mutase family. BPG-dependent PGAM subfamily. As to quaternary structure, interacts with Pk92B/ASK1.

The protein resides in the mitochondrion outer membrane. It catalyses the reaction O-phospho-L-seryl-[protein] + H2O = L-seryl-[protein] + phosphate. The catalysed reaction is O-phospho-L-threonyl-[protein] + H2O = L-threonyl-[protein] + phosphate. In terms of biological role, displays phosphatase activity for serine/threonine residues, and dephosphorylates and activates Pk92B kinase. Has apparently no phosphoglycerate mutase activity. The sequence is that of Serine/threonine-protein phosphatase Pgam5, mitochondrial from Drosophila willistoni (Fruit fly).